An 834-amino-acid chain; its full sequence is Periplasmic nitrate reductase (834 aa).

The segment at residues 1–29 (MNLTRREFAKANAAAIAAAAAGLPILVRA) is a signal peptide (tat-type signal). Residues 41–97 (LVWNKAPCRFCGTGCSVMVATRDGQVVATHGDIKAEVNRGINCVKGYFLSKIMYGSD) enclose the 4Fe-4S Mo/W bis-MGD-type domain. 4 residues coordinate [4Fe-4S] cluster: C48, C51, C55, and C83. Residues K85, Q152, N177, C181, 214 to 221 (WGSNMAEM), 245 to 249 (STFEH), 264 to 266 (QTD), M375, Q379, N485, 511 to 512 (SD), K534, D561, and 721 to 730 (TGRVLEHWHT) each bind Mo-bis(molybdopterin guanine dinucleotide). Position 797 (F797) interacts with substrate. Residues N805 and K822 each coordinate Mo-bis(molybdopterin guanine dinucleotide).

Belongs to the prokaryotic molybdopterin-containing oxidoreductase family. NasA/NapA/NarB subfamily. In terms of assembly, component of the periplasmic nitrate reductase NapAB complex composed of NapA and NapB. It depends on [4Fe-4S] cluster as a cofactor. Mo-bis(molybdopterin guanine dinucleotide) serves as cofactor. In terms of processing, predicted to be exported by the Tat system. The position of the signal peptide cleavage has not been experimentally proven.

It localises to the periplasm. It carries out the reaction 2 Fe(II)-[cytochrome] + nitrate + 2 H(+) = 2 Fe(III)-[cytochrome] + nitrite + H2O. Catalytic subunit of the periplasmic nitrate reductase complex NapAB. Receives electrons from NapB and catalyzes the reduction of nitrate to nitrite. The chain is Periplasmic nitrate reductase from Pseudomonas aeruginosa (strain LESB58).